The primary structure comprises 1499 residues: Ubiquitinating/deubiquitinating enzyme SdeA (1499 aa).

The tract at residues 1–193 is deubiquitinase; the sequence is MPKYVEGVEL…GKALRENTEK (193 aa). Active-site for deubiquitinase activity residues include histidine 64 and aspartate 80. Cysteine 118 acts as the Nucleophile; for deubiquitinase activity in catalysis. The segment at 760-1000 is mono-ADP-ribosyltransferase; sequence PPTRLFRGLN…KALAAFPSDT (241 aa). NAD(+) is bound at residue 766 to 772; sequence RGLNLSE. Glutamate 860 carries the 5-glutamyl glutamate modification. NAD(+) is bound at residue glutamate 862. Positions 1059-1181 form a coiled coil; sequence KEMGTIRREL…IDTKLADAYL (123 aa).

It belongs to the SidE family. As to quaternary structure, interacts with IcmS. In terms of processing, is able to ubiquitinate itself, but this modification is not required to ubiquitinate Rab33b. Post-translationally, glutamylated at Glu-860 by SidJ; glutamylation inhibits SdeA activity to catalyze the production of ADP-ribosylated ubiquitin.

The protein resides in the secreted. It is found in the host cell. It carries out the reaction L-arginyl-[protein] + NAD(+) = N(omega)-(ADP-D-ribosyl)-L-arginyl-[protein] + nicotinamide + H(+). Its activity is regulated as follows. Ubiquitination catalyzed by SdeA is insensitive to the cysteine alkylation agent maleimide, suggesting that a cysteine conjugation of ubiquitin does not form during the reaction. Secreted effector that interferes with the host cell ubiquitin pathway and is required for intracellular bacterial replication. Catalyzes the ubiquitination of several mammalian Rab proteins (Rab33b, Rab1, Rab6a and Rab30) during L.pneumophila infection, without engaging the standard cellular enzyme cascade (E1 and E2). Transfers an ADP-ribose moiety from NAD to the 'Arg-42' residue of ubiquitin in a reaction that releases nicotinamide. The modified ubiquitin is subsequently transferred to serine residues of the substrate protein via a phosphoribose linker that results in the release of AMP. Cannot ubiquitinate the endosomal Rab5 or the cytoskeletal small GTPase Rac1. Also acts as a deubiquitinase (DUB), catalyzing the cleavage of three of the most abundant polyubiquitin chains ('Lys-11', 'Lys-48' and 'Lys-63') with a distinct preference for 'Lys-63' linkages; is thus able to efficiently remove 'Lys-63'-linked polyubiquitin chains from the phagosomal surface. Is also able to remove NEDD8 from neddylated proteins, but is unable to recognize SUMO. The DUB activity of SdeA is important for regulating the dynamics of ubiquitin association with the bacterial phagosome, but is dispensable for its role in intracellular bacterial replication. The polypeptide is Ubiquitinating/deubiquitinating enzyme SdeA (Legionella pneumophila subsp. pneumophila (strain Philadelphia 1 / ATCC 33152 / DSM 7513)).